We begin with the raw amino-acid sequence, 447 residues long: GTPase Der (447 aa).

EngA-type G domains are found at residues 4 to 165 and 180 to 357; these read QIIT…PEEE and LQIV…KIWN. GTP contacts are provided by residues 10–17, 57–61, 119–122, 186–193, 233–237, and 298–301; these read GRPNVGKS, DTPGL, NKCE, GRPNAGKS, DTAGL, and NKWD. The KH-like domain maps to 358–443; the sequence is KKITTSKLNE…PIRFTYVKTK (86 aa).

This sequence belongs to the TRAFAC class TrmE-Era-EngA-EngB-Septin-like GTPase superfamily. EngA (Der) GTPase family. In terms of assembly, associates with the 50S ribosomal subunit.

GTPase that plays an essential role in the late steps of ribosome biogenesis. This chain is GTPase Der, found in Rickettsia rickettsii (strain Sheila Smith).